The primary structure comprises 454 residues: Phosphoglucosamine mutase (454 aa).

The active-site Phosphoserine intermediate is Ser-104. Mg(2+) is bound by residues Ser-104, Asp-247, Asp-249, and Asp-251. Ser-104 is subject to Phosphoserine.

This sequence belongs to the phosphohexose mutase family. Requires Mg(2+) as cofactor. In terms of processing, activated by phosphorylation.

It catalyses the reaction alpha-D-glucosamine 1-phosphate = D-glucosamine 6-phosphate. Catalyzes the conversion of glucosamine-6-phosphate to glucosamine-1-phosphate. The protein is Phosphoglucosamine mutase of Bifidobacterium animalis subsp. lactis (strain AD011).